We begin with the raw amino-acid sequence, 865 residues long: DNA mismatch repair protein MutS (865 aa).

609–616 (GPNMAGKS) serves as a coordination point for ATP.

This sequence belongs to the DNA mismatch repair MutS family.

Its function is as follows. This protein is involved in the repair of mismatches in DNA. It is possible that it carries out the mismatch recognition step. This protein has a weak ATPase activity. The protein is DNA mismatch repair protein MutS of Leuconostoc citreum (strain KM20).